The sequence spans 880 residues: Valine--tRNA ligase (880 aa).

Positions 49 to 59 match the 'HIGH' region motif; the sequence is PNVTGKLHLGH. The 'KMSKS' region motif lies at 525-529; sequence KMSKS. An ATP-binding site is contributed by Lys528. Positions 809 to 879 form a coiled coil; that stretch reads LAGLLDLEEE…AVRARIKELK (71 aa).

This sequence belongs to the class-I aminoacyl-tRNA synthetase family. ValS type 1 subfamily. In terms of assembly, monomer.

It is found in the cytoplasm. It catalyses the reaction tRNA(Val) + L-valine + ATP = L-valyl-tRNA(Val) + AMP + diphosphate. Functionally, catalyzes the attachment of valine to tRNA(Val). As ValRS can inadvertently accommodate and process structurally similar amino acids such as threonine, to avoid such errors, it has a 'posttransfer' editing activity that hydrolyzes mischarged Thr-tRNA(Val) in a tRNA-dependent manner. This chain is Valine--tRNA ligase, found in Halalkalibacterium halodurans (strain ATCC BAA-125 / DSM 18197 / FERM 7344 / JCM 9153 / C-125) (Bacillus halodurans).